Here is a 389-residue protein sequence, read N- to C-terminus: Monomeric sarcosine oxidase (389 aa).

8–38 (DVIVVGAGSMGMAAGYYLSKQGVKTLLVDSF) contacts FAD. Residue cysteine 318 is modified to S-8alpha-FAD cysteine.

This sequence belongs to the MSOX/MTOX family. MSOX subfamily. As to quaternary structure, monomer. FAD serves as cofactor.

It is found in the cytoplasm. The enzyme catalyses sarcosine + O2 + H2O = formaldehyde + glycine + H2O2. Functionally, catalyzes the oxidative demethylation of sarcosine. This is Monomeric sarcosine oxidase (soxA) from Arthrobacter sp. (strain TE1826).